We begin with the raw amino-acid sequence, 540 residues long: 2-isopropylmalate synthase (540 aa).

Positions 8-271 constitute a Pyruvate carboxyltransferase domain; sequence VLIFDTTLRD…NPFFGRESDS (264 aa). Residues Asp-17, His-208, His-210, and Asn-244 each coordinate Mn(2+). Residues 408-540 are regulatory domain; it reads QLRLVQVSCG…AVLADRRPGI (133 aa).

The protein belongs to the alpha-IPM synthase/homocitrate synthase family. LeuA type 1 subfamily. In terms of assembly, homodimer. Mn(2+) is required as a cofactor.

It is found in the cytoplasm. It carries out the reaction 3-methyl-2-oxobutanoate + acetyl-CoA + H2O = (2S)-2-isopropylmalate + CoA + H(+). The protein operates within amino-acid biosynthesis; L-leucine biosynthesis; L-leucine from 3-methyl-2-oxobutanoate: step 1/4. Functionally, catalyzes the condensation of the acetyl group of acetyl-CoA with 3-methyl-2-oxobutanoate (2-ketoisovalerate) to form 3-carboxy-3-hydroxy-4-methylpentanoate (2-isopropylmalate). This chain is 2-isopropylmalate synthase, found in Prochlorococcus marinus (strain MIT 9303).